Consider the following 512-residue polypeptide: 2,3-bisphosphoglycerate-independent phosphoglycerate mutase (512 aa).

2 residues coordinate Mn(2+): aspartate 14 and serine 64. The active-site Phosphoserine intermediate is serine 64. Substrate contacts are provided by residues histidine 125, 155–156, arginine 187, arginine 193, 259–262, and lysine 332; these read RD and RADR. The Mn(2+) site is built by aspartate 399, histidine 403, aspartate 440, histidine 441, and histidine 459.

It belongs to the BPG-independent phosphoglycerate mutase family. In terms of assembly, monomer. It depends on Mn(2+) as a cofactor.

The enzyme catalyses (2R)-2-phosphoglycerate = (2R)-3-phosphoglycerate. It participates in carbohydrate degradation; glycolysis; pyruvate from D-glyceraldehyde 3-phosphate: step 3/5. Its function is as follows. Catalyzes the interconversion of 2-phosphoglycerate and 3-phosphoglycerate. The chain is 2,3-bisphosphoglycerate-independent phosphoglycerate mutase from Ruthia magnifica subsp. Calyptogena magnifica.